The primary structure comprises 283 residues: uncharacterized protein (283 aa).

In terms of domain architecture, FAD-binding FR-type spans arginine 4 to aspartate 131.

This is an uncharacterized protein from Mycobacterium bovis (strain ATCC BAA-935 / AF2122/97).